We begin with the raw amino-acid sequence, 381 residues long: Selenoprotein P (381 aa).

A signal peptide spans 1 to 19; sequence MWRSLGLALALCLLPLGGT. Asparagine 46 is a glycosylation site (N-linked (GlcNAc...) asparagine). Residue selenocysteine 59 is a non-standard amino acid, selenocysteine. 3 N-linked (GlcNAc...) asparagine glycosylation sites follow: asparagine 83, asparagine 119, and asparagine 128. The tract at residues 202–268 is disordered; sequence SPHYHHEHHH…ENRDMPGSED (67 aa). Basic residues predominate over residues 204-217; the sequence is HYHHEHHHNHRHQH. Over residues 218–229 the composition is skewed to polar residues; sequence LGSSELSENQQP. A compositionally biased stretch (basic residues) spans 243–255; the sequence is LHHHHKHKGQHRQ. Serine 266 carries the post-translational modification Phosphoserine. Non-standard amino acids (selenocysteine) are located at selenocysteine 318 and selenocysteine 330. The N-linked (GlcNAc...) asparagine glycan is linked to asparagine 338. 6 non-standard amino acids (selenocysteine) are found at residues selenocysteine 345, selenocysteine 352, selenocysteine 367, selenocysteine 369, selenocysteine 376, and selenocysteine 378. The tract at residues 352 to 381 is disordered; sequence UQISQQLIPTEASTSURUKNQAKKUEUPSN. The span at 353 to 369 shows a compositional bias: polar residues; that stretch reads QISQQLIPTEASTSURU.

The protein belongs to the selenoprotein P family. In terms of processing, phosphorylation sites are present in the extracellular medium.

The protein localises to the secreted. In terms of biological role, might be responsible for some of the extracellular antioxidant defense properties of selenium or might be involved in the transport of selenium. May supply selenium to tissues such as brain and testis. This Pongo abelii (Sumatran orangutan) protein is Selenoprotein P.